A 1295-amino-acid polypeptide reads, in one-letter code: DNA-directed RNA polymerase subunit beta' (1295 aa).

4 residues coordinate Zn(2+): cysteine 60, cysteine 62, cysteine 75, and cysteine 78. The Mg(2+) site is built by aspartate 516, aspartate 518, and aspartate 520. Residues cysteine 841, cysteine 914, cysteine 921, and cysteine 924 each coordinate Zn(2+).

It belongs to the RNA polymerase beta' chain family. The RNAP catalytic core consists of 2 alpha, 1 beta, 1 beta' and 1 omega subunit. When a sigma factor is associated with the core the holoenzyme is formed, which can initiate transcription. Requires Mg(2+) as cofactor. Zn(2+) serves as cofactor.

It catalyses the reaction RNA(n) + a ribonucleoside 5'-triphosphate = RNA(n+1) + diphosphate. Functionally, DNA-dependent RNA polymerase catalyzes the transcription of DNA into RNA using the four ribonucleoside triphosphates as substrates. The protein is DNA-directed RNA polymerase subunit beta' of Dehalococcoides mccartyi (strain ATCC BAA-2266 / KCTC 15142 / 195) (Dehalococcoides ethenogenes (strain 195)).